Reading from the N-terminus, the 23-residue chain is Elongation factor Tu (23 aa).

This sequence belongs to the GTP-binding elongation factor family. EF-Tu/EF-1A subfamily. Monomer. Post-translationally, the N-terminus is blocked. In terms of processing, the C-terminus may be subjected to proteolysis.

Its subcellular location is the cytoplasm. Its function is as follows. This protein promotes the GTP-dependent binding of aminoacyl-tRNA to the A-site of ribosomes during protein biosynthesis. The sequence is that of Elongation factor Tu (tuf) from Delftia acidovorans (Pseudomonas acidovorans).